An 88-amino-acid chain; its full sequence is Large ribosomal subunit protein eL37 (88 aa).

A disordered region spans residues 1–24; sequence MTKGTTSFGKRHNKSHTQCRRCGR. Basic residues predominate over residues 9 to 24; that stretch reads GKRHNKSHTQCRRCGR. Positions 19, 22, 34, and 37 each coordinate Zn(2+). The C4-type zinc finger occupies 19 to 37; it reads CRRCGRKSYHIQKKTCSSC.

The protein belongs to the eukaryotic ribosomal protein eL37 family. Requires Zn(2+) as cofactor.

Binds to the 23S rRNA. In Schistosoma mansoni (Blood fluke), this protein is Large ribosomal subunit protein eL37 (RPL37).